The primary structure comprises 387 residues: MCSSVTGKLWFLTDRRIREDYPQKEILRALKAKCCEEELDFRAVVMDEMVLTVEQGNLGLRISGELISAYPQVVVVRVPTPWVQSDSDITVLRHLEKMGCRLMNRPQAILNCVNKFWTFQELAGHGVPLPDTFSYGGHENFAKMIDEAEVLEFPMVVKNTRGHRGKAVFLARDKHHLADLSHLIRHEAPYLFQKYIKESHGRDVRVIVVGGRVVGTMLRCSTDGRMQSNCSLGGVGMMCSLSEQGKQLAIQVSNILGTDVCGIDLLMKDDGSFCVCEANANVGFIAFDKACNLDVAGIIADYAASLLPAGRLTRRMSLLSVVSTASETSEPELGPPASAAVDNMSASSSSVDSDPESTTEREMLTKLPGGLFNMNQLLANEIKLLVE.

Residues F119–A304 enclose the ATP-grasp domain. ATP is bound by residues K158, Q193–D203, and R219. Mg(2+)-binding residues include D264, E277, and N279. The Mn(2+) site is built by D264, E277, and N279. Residues A325 to R361 form a disordered region. Residues A337–D352 are compositionally biased toward low complexity.

It belongs to the RimK family. The cofactor is Mg(2+). Mn(2+) is required as a cofactor. In terms of tissue distribution, strongly expressed in brain and testis. Expressed in eyes, thymus, lung, kidney, skeletal muscle, spleen, skin and heart. Expressed in neurons of the neocortex, the gray matter and Purkinje cells.

It is found in the cytoplasm. It carries out the reaction citrate + L-glutamate + ATP = beta-citrylglutamate + ADP + phosphate + H(+). The catalysed reaction is N-acetyl-L-aspartate + L-glutamate + ATP = N-acetyl-L-aspartyl-L-glutamate + ADP + phosphate + H(+). In terms of biological role, catalyzes the synthesis of beta-citryl-L-glutamate and N-acetyl-L-aspartyl-L-glutamate. Beta-citryl-L-glutamate is synthesized more efficiently than N-acetyl-L-aspartyl-L-glutamate. The chain is Beta-citrylglutamate synthase B (Rimklb) from Mus musculus (Mouse).